Reading from the N-terminus, the 72-residue chain is MKITYPSIDKLLSRVNSRYSLSVLAAKRAHEIQAGAPLALKHYKSDKAVGEALEEIAAGKVTIDPEHREDIG.

This sequence belongs to the RNA polymerase subunit omega family. As to quaternary structure, the RNAP catalytic core consists of 2 alpha, 1 beta, 1 beta' and 1 omega subunit. When a sigma factor is associated with the core the holoenzyme is formed, which can initiate transcription.

The catalysed reaction is RNA(n) + a ribonucleoside 5'-triphosphate = RNA(n+1) + diphosphate. In terms of biological role, promotes RNA polymerase assembly. Latches the N- and C-terminal regions of the beta' subunit thereby facilitating its interaction with the beta and alpha subunits. This is DNA-directed RNA polymerase subunit omega from Lactobacillus johnsonii (strain CNCM I-12250 / La1 / NCC 533).